Consider the following 350-residue polypeptide: Nicotinate-nucleotide--dimethylbenzimidazole phosphoribosyltransferase (350 aa).

Glu-317 (proton acceptor) is an active-site residue.

The protein belongs to the CobT family.

It carries out the reaction 5,6-dimethylbenzimidazole + nicotinate beta-D-ribonucleotide = alpha-ribazole 5'-phosphate + nicotinate + H(+). Its pathway is nucleoside biosynthesis; alpha-ribazole biosynthesis; alpha-ribazole from 5,6-dimethylbenzimidazole: step 1/2. Its function is as follows. Catalyzes the synthesis of alpha-ribazole-5'-phosphate from nicotinate mononucleotide (NAMN) and 5,6-dimethylbenzimidazole (DMB). The protein is Nicotinate-nucleotide--dimethylbenzimidazole phosphoribosyltransferase of Shewanella sp. (strain ANA-3).